Consider the following 124-residue polypeptide: Small ribosomal subunit protein uS12 (124 aa).

Aspartate 89 carries the post-translational modification 3-methylthioaspartic acid.

It belongs to the universal ribosomal protein uS12 family. In terms of assembly, part of the 30S ribosomal subunit. Contacts proteins S8 and S17. May interact with IF1 in the 30S initiation complex.

Functionally, with S4 and S5 plays an important role in translational accuracy. Its function is as follows. Interacts with and stabilizes bases of the 16S rRNA that are involved in tRNA selection in the A site and with the mRNA backbone. Located at the interface of the 30S and 50S subunits, it traverses the body of the 30S subunit contacting proteins on the other side and probably holding the rRNA structure together. The combined cluster of proteins S8, S12 and S17 appears to hold together the shoulder and platform of the 30S subunit. This is Small ribosomal subunit protein uS12 from Campylobacter hominis (strain ATCC BAA-381 / DSM 21671 / CCUG 45161 / LMG 19568 / NCTC 13146 / CH001A).